Reading from the N-terminus, the 315-residue chain is Leukocidin-S subunit (315 aa).

The N-terminal stretch at 1-29 is a signal peptide; sequence MLKNKILATTLSVSLLAPLANPLLENAKA.

It belongs to the aerolysin family. In terms of assembly, leukocidin consists of two protein components: F and S.

Its function is as follows. Leukocidin causes cytotoxic changes in polymorphonuclear leukocytes. The protein is Leukocidin-S subunit (lukS) of Staphylococcus aureus.